The sequence spans 264 residues: Inner membrane ABC transporter permease protein YdcV (264 aa).

Over 1 to 12 the chain is Cytoplasmic; that stretch reads MHSERAPFFLKL. A helical membrane pass occupies residues 13–33; the sequence is AAWGGVVFLHFPILIIAAYAF. The Periplasmic portion of the chain corresponds to 34–70; the sequence is NTEDAAFSFPPQGLTLRWFSVAAQRSDILDAVTLSLK. Positions 65-252 constitute an ABC transmembrane type-1 domain; sequence VTLSLKVAAL…MLVTTLPILG (188 aa). A helical transmembrane segment spans residues 71 to 91; sequence VAALATLIALVLGTLAAAALW. Residues 92–100 are Cytoplasmic-facing; it reads RRDFFGKNA. The helical transmembrane segment at 101 to 121 threads the bilayer; the sequence is ISLLLLLPIALPGIVTGLALL. The Periplasmic segment spans residues 122 to 128; it reads TAFKTIN. A helical membrane pass occupies residues 129-149; sequence LEPGFFTIVVGHATFCVVVVF. At 150–189 the chain is on the cytoplasmic side; sequence NNVIARFRRTSWSLVEASMDLGANGWQTFRYVVLPNLSSA. Residues 190-210 form a helical membrane-spanning segment; it reads LLAGGMLAFALSFDEIIVTTF. At 211 to 236 the chain is on the periplasmic side; sequence TAGHERTLPLWLLNQLGRPRDVPVTN. The helical transmembrane segment at 237–257 threads the bilayer; that stretch reads VVALLVMLVTTLPILGAWWLT. Over 258–264 the chain is Cytoplasmic; sequence REGDNGQ.

Belongs to the binding-protein-dependent transport system permease family. CysTW subfamily.

The protein resides in the cell inner membrane. Its function is as follows. Probably part of the ABC transporter complex YdcSTUV. Probably responsible for the translocation of the substrate across the membrane. The polypeptide is Inner membrane ABC transporter permease protein YdcV (ydcV) (Shigella flexneri).